We begin with the raw amino-acid sequence, 141 residues long: Hemoglobin D subunit alpha (141 aa).

Residues Met1–Arg141 form the Globin domain. His58 contacts O2. His87 is a heme b binding site.

This sequence belongs to the globin family. In terms of assembly, tetramer of two alpha chains and two beta chains. As to expression, red blood cells.

Its function is as follows. Involved in oxygen transport from the lung to the various peripheral tissues. This is Hemoglobin D subunit alpha from Aldabrachelys gigantea (Aldabra giant tortoise).